We begin with the raw amino-acid sequence, 579 residues long: Eukaryotic translation initiation factor 3 subunit D (579 aa).

Disordered stretches follow at residues 1–20 (MASF…GPAS), 51–72 (NASG…RARD), and 109–170 (RRGG…FGWK). Low complexity predominate over residues 51–64 (NASGASNDAANARG). Residues 120–167 (GGRGGRGGAGGAGAAGGRGASKFGAGAGRGARGGRGGAAGARRGGGRF) show a composition bias toward gly residues. The tract at residues 307–321 (AFDYLTVNENAADPP) is RNA gate.

Belongs to the eIF-3 subunit D family. Component of the eukaryotic translation initiation factor 3 (eIF-3) complex.

It localises to the cytoplasm. MRNA cap-binding component of the eukaryotic translation initiation factor 3 (eIF-3) complex, which is involved in protein synthesis of a specialized repertoire of mRNAs and, together with other initiation factors, stimulates binding of mRNA and methionyl-tRNAi to the 40S ribosome. The eIF-3 complex specifically targets and initiates translation of a subset of mRNAs involved in cell proliferation. In the eIF-3 complex, eif3d specifically recognizes and binds the 7-methylguanosine cap of a subset of mRNAs. The polypeptide is Eukaryotic translation initiation factor 3 subunit D (Mycosarcoma maydis (Corn smut fungus)).